We begin with the raw amino-acid sequence, 230 residues long: 5'-methylthioadenosine/S-adenosylhomocysteine nucleosidase (230 aa).

E12 (proton acceptor) is an active-site residue. Residues G78, I152, and 173–174 (ME) contribute to the substrate site. Residue D197 is the Proton donor of the active site.

The protein belongs to the PNP/UDP phosphorylase family. MtnN subfamily.

It catalyses the reaction S-adenosyl-L-homocysteine + H2O = S-(5-deoxy-D-ribos-5-yl)-L-homocysteine + adenine. The catalysed reaction is S-methyl-5'-thioadenosine + H2O = 5-(methylsulfanyl)-D-ribose + adenine. It carries out the reaction 5'-deoxyadenosine + H2O = 5-deoxy-D-ribose + adenine. Its pathway is amino-acid biosynthesis; L-methionine biosynthesis via salvage pathway; S-methyl-5-thio-alpha-D-ribose 1-phosphate from S-methyl-5'-thioadenosine (hydrolase route): step 1/2. Catalyzes the irreversible cleavage of the glycosidic bond in both 5'-methylthioadenosine (MTA) and S-adenosylhomocysteine (SAH/AdoHcy) to adenine and the corresponding thioribose, 5'-methylthioribose and S-ribosylhomocysteine, respectively. Also cleaves 5'-deoxyadenosine, a toxic by-product of radical S-adenosylmethionine (SAM) enzymes, into 5-deoxyribose and adenine. In Haemophilus influenzae (strain 86-028NP), this protein is 5'-methylthioadenosine/S-adenosylhomocysteine nucleosidase.